The primary structure comprises 358 residues: 3-dehydroquinate synthase (358 aa).

Residues 102–106 (GVVGD), 126–127 (TT), K139, and K148 contribute to the NAD(+) site. Residues E181, H244, and H260 each contribute to the Zn(2+) site.

This sequence belongs to the sugar phosphate cyclases superfamily. Dehydroquinate synthase family. It depends on Co(2+) as a cofactor. Zn(2+) serves as cofactor. Requires NAD(+) as cofactor.

Its subcellular location is the cytoplasm. It carries out the reaction 7-phospho-2-dehydro-3-deoxy-D-arabino-heptonate = 3-dehydroquinate + phosphate. The protein operates within metabolic intermediate biosynthesis; chorismate biosynthesis; chorismate from D-erythrose 4-phosphate and phosphoenolpyruvate: step 2/7. Catalyzes the conversion of 3-deoxy-D-arabino-heptulosonate 7-phosphate (DAHP) to dehydroquinate (DHQ). This chain is 3-dehydroquinate synthase, found in Symbiobacterium thermophilum (strain DSM 24528 / JCM 14929 / IAM 14863 / T).